Reading from the N-terminus, the 515-residue chain is Bifunctional purine biosynthesis protein PurH (515 aa).

Residues 1 to 145 (MTKRVLISVS…KNHASVTVVV (145 aa)) enclose the MGS-like domain.

This sequence belongs to the PurH family.

The enzyme catalyses (6R)-10-formyltetrahydrofolate + 5-amino-1-(5-phospho-beta-D-ribosyl)imidazole-4-carboxamide = 5-formamido-1-(5-phospho-D-ribosyl)imidazole-4-carboxamide + (6S)-5,6,7,8-tetrahydrofolate. The catalysed reaction is IMP + H2O = 5-formamido-1-(5-phospho-D-ribosyl)imidazole-4-carboxamide. It functions in the pathway purine metabolism; IMP biosynthesis via de novo pathway; 5-formamido-1-(5-phospho-D-ribosyl)imidazole-4-carboxamide from 5-amino-1-(5-phospho-D-ribosyl)imidazole-4-carboxamide (10-formyl THF route): step 1/1. It participates in purine metabolism; IMP biosynthesis via de novo pathway; IMP from 5-formamido-1-(5-phospho-D-ribosyl)imidazole-4-carboxamide: step 1/1. The protein is Bifunctional purine biosynthesis protein PurH of Streptococcus pneumoniae (strain P1031).